Consider the following 367-residue polypeptide: MAASDALQSIVYSRGSLRLLDQRKLPLEMEYIDVKSSADGWNAIRDMVVRGAPAIAIAAALALAVEVSDLDFIGTPEEAASFVSKKLEYLVSSRPTAVNLSDAATKLQTLVSKAAETAKDSKSIFQVYIEAAETMLVDDVADNKAIGSHGAVFLQRQLANSKKISVLTHCNTGSLATAGYGTALGVIRALHSGGVLEKAFCTETRPFNQGSRLTAFELVHEKIPATLIADSAAAALMKQGHVQAVIVGADRIAANGDTANKIGTYNLAISAKHHSVQFYVSAPVTSIDLSLPSGDEIVIEERSPKELLNSEGGLGKQVAASGISVWNPAFDVTPANLITAIITEKGVITKTDADGSFDIKGFLLPAK.

Asp250 serves as the catalytic Proton donor.

Belongs to the eIF-2B alpha/beta/delta subunits family. MtnA subfamily.

The protein localises to the cytoplasm. Its subcellular location is the nucleus. The catalysed reaction is 5-(methylsulfanyl)-alpha-D-ribose 1-phosphate = 5-(methylsulfanyl)-D-ribulose 1-phosphate. It functions in the pathway amino-acid biosynthesis; L-methionine biosynthesis via salvage pathway; L-methionine from S-methyl-5-thio-alpha-D-ribose 1-phosphate: step 1/6. Functionally, catalyzes the interconversion of methylthioribose-1-phosphate (MTR-1-P) into methylthioribulose-1-phosphate (MTRu-1-P). This is Methylthioribose-1-phosphate isomerase (IDI2) from Zea mays (Maize).